The following is a 209-amino-acid chain: SelT-like protein (209 aa).

The signal sequence occupies residues 1 to 22 (MDKTQLILLGLPIFLLCSDLFN). An intrachain disulfide couples cysteine 64 to cysteine 67.

Belongs to the SelWTH family. SELT subfamily.

The protein is SelT-like protein of Arabidopsis thaliana (Mouse-ear cress).